A 678-amino-acid chain; its full sequence is SPS-sensor component PTR3 (678 aa).

Disordered stretches follow at residues 111–158 (TGQG…SDPT) and 179–211 (ANTEVGSDHPLTTGTTRDQEEHTTKENYSSSLL). Positions 127 to 144 (TSPSSSSLSLTPSRSSST) are enriched in low complexity. The segment covering 149–158 (ADNKTLSDPT) has biased composition (basic and acidic residues). The segment covering 179–194 (ANTEVGSDHPLTTGTT) has biased composition (polar residues).

In terms of assembly, homodimer. Component of the plasma membrane SPS (SSY1-PTR3-SSY5) amino acid sensor complex. Interacts directly with SSY1 and SSY5. Hyperphosphorylated in response to extracellular amino acids and dependent on the amino acid sensor component SSY1. Phosphorylation is positively regulated by casein kinases YCK1 and YCK2, and negatively regulated by phosphatase PP2A regulatory subunit RTS1.

The protein resides in the cell membrane. Its function is as follows. Component of the SPS-sensor system, which regulates the expression of several amino acid-metabolizing enzymes and amino acid- and peptide-permeases in response to extracellular amino acid levels by controlling the activity of two transcription factors, STP1 and STP2. This chain is SPS-sensor component PTR3 (PTR3), found in Saccharomyces cerevisiae (strain ATCC 204508 / S288c) (Baker's yeast).